The primary structure comprises 210 residues: MKQNSAKFIVIEGLEGAGKSSAIALVRDFIEKHNGVPPVCTREPGGTPLAERIRDLVKIADPNDPLCDESECLLIYAARAQLVANVIKPALAQGNWVLGDRHNLSSLAYQGGGRQLMPLVEAVSQATLKDFKPDLTLYLDIDPQLGLQRARDRGALDRIEQQALSFFERARATYLQLAARDESIVVIDASQTMAQVHKEILAVLQRQDWS.

Residue 13-20 (GLEGAGKS) participates in ATP binding.

This sequence belongs to the thymidylate kinase family.

It carries out the reaction dTMP + ATP = dTDP + ADP. In terms of biological role, phosphorylation of dTMP to form dTDP in both de novo and salvage pathways of dTTP synthesis. The chain is Thymidylate kinase from Shewanella loihica (strain ATCC BAA-1088 / PV-4).